The following is a 449-amino-acid chain: Phosphoglucosamine mutase (449 aa).

Ser103 functions as the Phosphoserine intermediate in the catalytic mechanism. 4 residues coordinate Mg(2+): Ser103, Asp240, Asp242, and Asp244. Ser103 carries the phosphoserine modification.

This sequence belongs to the phosphohexose mutase family. Mg(2+) serves as cofactor. In terms of processing, activated by phosphorylation.

The enzyme catalyses alpha-D-glucosamine 1-phosphate = D-glucosamine 6-phosphate. In terms of biological role, catalyzes the conversion of glucosamine-6-phosphate to glucosamine-1-phosphate. This is Phosphoglucosamine mutase from Thermobifida fusca (strain YX).